The following is a 300-amino-acid chain: MSAAPPVAVSAPSRLRQFYALTKPRVVQLIVFCALIGMVLAVPGLPSAAQWGRIAWACAGVWLVAGAAAAFNCIVEQGIDAKMKRTAWRPTARGELSNAQTLLFSALLCVAGSALLYFLVNPLTMWLTFATFVGYAVIYTLILKPLTPQNIVIGGASGAMPPVLGWAAMTNTVGPEALILFLIIFLWTPPHFWALALYRVEEYRQSGLPMLPVTHGSAFTRLQVLLYTLILFAACLMPFIYGMSSWPYLAAAVLLGAGFCGYGFALWRNYSDALARKTFRFSLIHLSALFAALLLDHYLP.

The next 9 helical transmembrane spans lie at 26–46 (VVQLIVFCALIGMVLAVPGLP), 54–74 (IAWACAGVWLVAGAAAAFNCI), 102–122 (LLFSALLCVAGSALLYFLVNP), 123–143 (LTMWLTFATFVGYAVIYTLIL), 150–170 (NIVIGGASGAMPPVLGWAAMT), 177–197 (ALILFLIIFLWTPPHFWALAL), 224–244 (VLLYTLILFAACLMPFIYGMS), 246–266 (WPYLAAAVLLGAGFCGYGFAL), and 279–299 (FRFSLIHLSALFAALLLDHYL).

It belongs to the UbiA prenyltransferase family. Protoheme IX farnesyltransferase subfamily.

It localises to the cell inner membrane. It carries out the reaction heme b + (2E,6E)-farnesyl diphosphate + H2O = Fe(II)-heme o + diphosphate. It functions in the pathway porphyrin-containing compound metabolism; heme O biosynthesis; heme O from protoheme: step 1/1. Its function is as follows. Converts heme B (protoheme IX) to heme O by substitution of the vinyl group on carbon 2 of heme B porphyrin ring with a hydroxyethyl farnesyl side group. The chain is Protoheme IX farnesyltransferase from Verminephrobacter eiseniae (strain EF01-2).